The chain runs to 258 residues: Imidazole glycerol phosphate synthase subunit HisF (258 aa).

Catalysis depends on residues Asp-12 and Asp-131.

It belongs to the HisA/HisF family. As to quaternary structure, heterodimer of HisH and HisF.

It localises to the cytoplasm. It carries out the reaction 5-[(5-phospho-1-deoxy-D-ribulos-1-ylimino)methylamino]-1-(5-phospho-beta-D-ribosyl)imidazole-4-carboxamide + L-glutamine = D-erythro-1-(imidazol-4-yl)glycerol 3-phosphate + 5-amino-1-(5-phospho-beta-D-ribosyl)imidazole-4-carboxamide + L-glutamate + H(+). The protein operates within amino-acid biosynthesis; L-histidine biosynthesis; L-histidine from 5-phospho-alpha-D-ribose 1-diphosphate: step 5/9. Its function is as follows. IGPS catalyzes the conversion of PRFAR and glutamine to IGP, AICAR and glutamate. The HisF subunit catalyzes the cyclization activity that produces IGP and AICAR from PRFAR using the ammonia provided by the HisH subunit. This Arthrobacter sp. (strain FB24) protein is Imidazole glycerol phosphate synthase subunit HisF.